The sequence spans 321 residues: Lipoyl synthase (321 aa).

C68, C73, C79, C94, C98, C101, and S308 together coordinate [4Fe-4S] cluster. Residues 80–297 enclose the Radical SAM core domain; sequence FNHGTATFMI…KALADELGFT (218 aa).

The protein belongs to the radical SAM superfamily. Lipoyl synthase family. [4Fe-4S] cluster serves as cofactor.

Its subcellular location is the cytoplasm. It carries out the reaction [[Fe-S] cluster scaffold protein carrying a second [4Fe-4S](2+) cluster] + N(6)-octanoyl-L-lysyl-[protein] + 2 oxidized [2Fe-2S]-[ferredoxin] + 2 S-adenosyl-L-methionine + 4 H(+) = [[Fe-S] cluster scaffold protein] + N(6)-[(R)-dihydrolipoyl]-L-lysyl-[protein] + 4 Fe(3+) + 2 hydrogen sulfide + 2 5'-deoxyadenosine + 2 L-methionine + 2 reduced [2Fe-2S]-[ferredoxin]. It functions in the pathway protein modification; protein lipoylation via endogenous pathway; protein N(6)-(lipoyl)lysine from octanoyl-[acyl-carrier-protein]: step 2/2. Catalyzes the radical-mediated insertion of two sulfur atoms into the C-6 and C-8 positions of the octanoyl moiety bound to the lipoyl domains of lipoate-dependent enzymes, thereby converting the octanoylated domains into lipoylated derivatives. This is Lipoyl synthase from Shewanella putrefaciens (strain CN-32 / ATCC BAA-453).